We begin with the raw amino-acid sequence, 37 residues long: Large ribosomal subunit protein bL36 (37 aa).

The protein belongs to the bacterial ribosomal protein bL36 family.

The sequence is that of Large ribosomal subunit protein bL36 from Legionella pneumophila subsp. pneumophila (strain Philadelphia 1 / ATCC 33152 / DSM 7513).